Consider the following 374-residue polypeptide: Dihydroorotate dehydrogenase (quinone) (374 aa).

FMN is bound by residues 78 to 82 (AGFDK) and Thr-102. Position 82 (Lys-82) interacts with substrate. 127 to 131 (NRMGF) lines the substrate pocket. 2 residues coordinate FMN: Asn-159 and Asn-192. A substrate-binding site is contributed by Asn-192. The active-site Nucleophile is Ser-195. Asn-197 serves as a coordination point for substrate. 2 residues coordinate FMN: Lys-230 and Thr-258. 259-260 (NT) lines the substrate pocket. FMN-binding positions include Gly-287, Gly-316, and 337-338 (YT).

This sequence belongs to the dihydroorotate dehydrogenase family. Type 2 subfamily. As to quaternary structure, monomer. Requires FMN as cofactor.

The protein localises to the cell membrane. It carries out the reaction (S)-dihydroorotate + a quinone = orotate + a quinol. Its pathway is pyrimidine metabolism; UMP biosynthesis via de novo pathway; orotate from (S)-dihydroorotate (quinone route): step 1/1. Catalyzes the conversion of dihydroorotate to orotate with quinone as electron acceptor. The protein is Dihydroorotate dehydrogenase (quinone) of Acaryochloris marina (strain MBIC 11017).